The sequence spans 521 residues: Ribonuclease Y (521 aa).

The helical transmembrane segment at 10-30 (LIITAGVSIALAIVAFFLGYL) threads the bilayer. Residues 210–270 (TVSVVTLPND…IRREIAKLTL (61 aa)) enclose the KH domain. Residues 336 to 430 (VLAHSIEVAN…IQAADSVSAA (95 aa)) enclose the HD domain.

The protein belongs to the RNase Y family.

It localises to the cell membrane. Functionally, endoribonuclease that initiates mRNA decay. The sequence is that of Ribonuclease Y from Caldicellulosiruptor saccharolyticus (strain ATCC 43494 / DSM 8903 / Tp8T 6331).